Here is a 1329-residue protein sequence, read N- to C-terminus: BRCT domain-containing protein At4g02110 (1329 aa).

BRCT domains follow at residues 7–97 (LPPK…SILY) and 104–194 (NGIP…DYEI). Disordered stretches follow at residues 295-378 (ANKT…SMER), 393-470 (GEEF…TSEL), 576-645 (EVPE…SPTD), 745-827 (NDVP…ADGK), and 952-1077 (AKKE…KESK). Polar residues-rich tracts occupy residues 323-335 (SLATYSRKTLQRS) and 363-378 (SAFNTSASKSGSSMER). 2 stretches are compositionally biased toward basic and acidic residues: residues 410-422 (VSRKDSLRVHHNS) and 600-611 (RMKDKQETELTT). A compositionally biased stretch (basic residues) spans 793–802 (GKSRVKKTKI). 2 stretches are compositionally biased toward basic and acidic residues: residues 818-827 (DGGDNSADGK) and 971-983 (DDNKCKHGKEGIV). Residues 986–1004 (SSLQSGKKGSSSRVEVGKS) are compositionally biased toward low complexity. The segment covering 1024-1047 (VMKDVGDNSAKEKENIAVDNESRK) has biased composition (basic and acidic residues). A BRCT 3 domain is found at 1090–1181 (FQDQEHEPKF…KLLQEEPYEW (92 aa)).

In Arabidopsis thaliana (Mouse-ear cress), this protein is BRCT domain-containing protein At4g02110.